The chain runs to 420 residues: ATP phosphoribosyltransferase regulatory subunit (420 aa).

The protein belongs to the class-II aminoacyl-tRNA synthetase family. HisZ subfamily. As to quaternary structure, heteromultimer composed of HisG and HisZ subunits.

The protein localises to the cytoplasm. It participates in amino-acid biosynthesis; L-histidine biosynthesis; L-histidine from 5-phospho-alpha-D-ribose 1-diphosphate: step 1/9. Its function is as follows. Required for the first step of histidine biosynthesis. May allow the feedback regulation of ATP phosphoribosyltransferase activity by histidine. The polypeptide is ATP phosphoribosyltransferase regulatory subunit (Bacillus thuringiensis subsp. konkukian (strain 97-27)).